The primary structure comprises 155 residues: Ubiquinone biosynthesis protein COQ4 homolog, mitochondrial (155 aa).

This sequence belongs to the COQ4 family. Component of a multi-subunit COQ enzyme complex. It depends on Zn(2+) as a cofactor.

Its subcellular location is the mitochondrion inner membrane. It catalyses the reaction a 4-hydroxy-3-methoxy-5-(all-trans-polyprenyl)benzoate + H(+) = a 2-methoxy-6-(all-trans-polyprenyl)phenol + CO2. Its pathway is cofactor biosynthesis; ubiquinone biosynthesis. Lyase that catalyzes the C1-decarboxylation of 4-hydroxy-3-methoxy-5-(all-trans-polyprenyl)benzoic acid into 2-methoxy-6-(all-trans-polyprenyl)phenol during ubiquinone biosynthesis. The polypeptide is Ubiquinone biosynthesis protein COQ4 homolog, mitochondrial (Cryptosporidium hominis).